A 180-amino-acid polypeptide reads, in one-letter code: MEQRRLASTEWVDIVNEENEVIAQASREQMRAQCLRHRATYIVVHDGMGKILVQRRTETKDFLPGMLDATAGGVVQADEQLLESARREAEEELGIAGVPFAEHGQFYFEDKNCRVWGALFSCVSHGPFALQEDEVSEVCWLTPEEITARCDEFTPDSLKALALWMKRNAKNEAVETETAE.

The 129-residue stretch at 35 to 163 (LRHRATYIVV…TPDSLKALAL (129 aa)) folds into the Nudix hydrolase domain. A Nudix box motif is present at residues 72–94 (GGVVQADEQLLESARREAEEELG). Positions 88 and 92 each coordinate Mg(2+).

This sequence belongs to the Nudix hydrolase family. It depends on Mg(2+) as a cofactor.

This is an uncharacterized protein from Escherichia coli O157:H7.